We begin with the raw amino-acid sequence, 204 residues long: Leucyl/phenylalanyl-tRNA--protein transferase (204 aa).

This sequence belongs to the L/F-transferase family.

It localises to the cytoplasm. The enzyme catalyses N-terminal L-lysyl-[protein] + L-leucyl-tRNA(Leu) = N-terminal L-leucyl-L-lysyl-[protein] + tRNA(Leu) + H(+). The catalysed reaction is N-terminal L-arginyl-[protein] + L-leucyl-tRNA(Leu) = N-terminal L-leucyl-L-arginyl-[protein] + tRNA(Leu) + H(+). It carries out the reaction L-phenylalanyl-tRNA(Phe) + an N-terminal L-alpha-aminoacyl-[protein] = an N-terminal L-phenylalanyl-L-alpha-aminoacyl-[protein] + tRNA(Phe). In terms of biological role, functions in the N-end rule pathway of protein degradation where it conjugates Leu, Phe and, less efficiently, Met from aminoacyl-tRNAs to the N-termini of proteins containing an N-terminal arginine or lysine. In Brucella anthropi (strain ATCC 49188 / DSM 6882 / CCUG 24695 / JCM 21032 / LMG 3331 / NBRC 15819 / NCTC 12168 / Alc 37) (Ochrobactrum anthropi), this protein is Leucyl/phenylalanyl-tRNA--protein transferase.